Here is a 157-residue protein sequence, read N- to C-terminus: 2-C-methyl-D-erythritol 2,4-cyclodiphosphate synthase (157 aa).

D8 and H10 together coordinate a divalent metal cation. Residues 8 to 10 and 34 to 35 contribute to the 4-CDP-2-C-methyl-D-erythritol 2-phosphate site; these read DVH and HS. A divalent metal cation is bound at residue H42. Residues 56 to 58, 132 to 135, F139, and R142 each bind 4-CDP-2-C-methyl-D-erythritol 2-phosphate; these read DIG and TTNE.

The protein belongs to the IspF family. As to quaternary structure, homotrimer. Requires a divalent metal cation as cofactor.

It carries out the reaction 4-CDP-2-C-methyl-D-erythritol 2-phosphate = 2-C-methyl-D-erythritol 2,4-cyclic diphosphate + CMP. It functions in the pathway isoprenoid biosynthesis; isopentenyl diphosphate biosynthesis via DXP pathway; isopentenyl diphosphate from 1-deoxy-D-xylulose 5-phosphate: step 4/6. Functionally, involved in the biosynthesis of isopentenyl diphosphate (IPP) and dimethylallyl diphosphate (DMAPP), two major building blocks of isoprenoid compounds. Catalyzes the conversion of 4-diphosphocytidyl-2-C-methyl-D-erythritol 2-phosphate (CDP-ME2P) to 2-C-methyl-D-erythritol 2,4-cyclodiphosphate (ME-CPP) with a corresponding release of cytidine 5-monophosphate (CMP). In Symbiobacterium thermophilum (strain DSM 24528 / JCM 14929 / IAM 14863 / T), this protein is 2-C-methyl-D-erythritol 2,4-cyclodiphosphate synthase.